The sequence spans 1199 residues: DNA-directed RNA polymerase subunit beta (1199 aa).

Residues 1175-1199 (EEKKAHEAAAQATDGKSANSTDDKK) form a disordered region. Over residues 1188 to 1199 (DGKSANSTDDKK) the composition is skewed to polar residues.

Belongs to the RNA polymerase beta chain family. The RNAP catalytic core consists of 2 alpha, 1 beta, 1 beta' and 1 omega subunit. When a sigma factor is associated with the core the holoenzyme is formed, which can initiate transcription.

It catalyses the reaction RNA(n) + a ribonucleoside 5'-triphosphate = RNA(n+1) + diphosphate. DNA-dependent RNA polymerase catalyzes the transcription of DNA into RNA using the four ribonucleoside triphosphates as substrates. This Lacticaseibacillus paracasei (strain ATCC 334 / BCRC 17002 / CCUG 31169 / CIP 107868 / KCTC 3260 / NRRL B-441) (Lactobacillus paracasei) protein is DNA-directed RNA polymerase subunit beta.